Here is a 156-residue protein sequence, read N- to C-terminus: Transcription antitermination protein NusB (156 aa).

It belongs to the NusB family.

Its function is as follows. Involved in transcription antitermination. Required for transcription of ribosomal RNA (rRNA) genes. Binds specifically to the boxA antiterminator sequence of the ribosomal RNA (rrn) operons. The polypeptide is Transcription antitermination protein NusB (Clostridium kluyveri (strain ATCC 8527 / DSM 555 / NBRC 12016 / NCIMB 10680 / K1)).